The chain runs to 123 residues: Small ribosomal subunit protein uS12 (123 aa).

Asp89 bears the 3-methylthioaspartic acid mark.

It belongs to the universal ribosomal protein uS12 family. In terms of assembly, part of the 30S ribosomal subunit. Contacts proteins S8 and S17. May interact with IF1 in the 30S initiation complex.

Functionally, with S4 and S5 plays an important role in translational accuracy. Its function is as follows. Interacts with and stabilizes bases of the 16S rRNA that are involved in tRNA selection in the A site and with the mRNA backbone. Located at the interface of the 30S and 50S subunits, it traverses the body of the 30S subunit contacting proteins on the other side and probably holding the rRNA structure together. The combined cluster of proteins S8, S12 and S17 appears to hold together the shoulder and platform of the 30S subunit. The chain is Small ribosomal subunit protein uS12 from Syntrophobacter fumaroxidans (strain DSM 10017 / MPOB).